The following is a 330-amino-acid chain: Free fatty acid receptor 2 (330 aa).

Residues 1-12 (MLPDWKSSLILM) are Extracellular-facing. The helical transmembrane segment at 13 to 33 (AYIIIFLTGLPANLLALRAFV) threads the bilayer. At 34 to 41 (GRIRQPQP) the chain is on the cytoplasmic side. A helical transmembrane segment spans residues 42–62 (APVHILLLSLTLADLLLLLLL). The Extracellular segment spans residues 63–84 (PFKIIEAASNFRWYLPKVVCAL). The helical transmembrane segment at 85-105 (TSFGFYSSIYCSTWLLAGISI) threads the bilayer. At 106-126 (ERYLGVAFPVQYKLSRRPLYG) the chain is on the cytoplasmic side. A helical transmembrane segment spans residues 127–147 (VIAALVAWVMSFGHCTIVIIV). Topologically, residues 148-173 (QYLNTTEQVRSGNEITCYENFTDNQL) are extracellular. Asn151 and Asn167 each carry an N-linked (GlcNAc...) asparagine glycan. A helical transmembrane segment spans residues 174–194 (DVVLPVRLELCLVLFFIPMAV). At 195 to 219 (TIFCYWRFVWIMLSQPLVGAQRRRR) the chain is on the cytoplasmic side. The chain crosses the membrane as a helical span at residues 220–240 (AVGLAVVTLLNFLVCFGPYNV). Residues 241–255 (SHLVGYHQRKSPWWR) are Extracellular-facing. The chain crosses the membrane as a helical span at residues 256-276 (SIAVVFSSLNASLDPLLFYFS). The Cytoplasmic portion of the chain corresponds to 277–330 (SSVVRRAFGRGLQVLRNQGSSLLGRRGKDTAEGTNEDRGVGQGEGMPSSDFTTE). A disordered region spans residues 299-330 (LGRRGKDTAEGTNEDRGVGQGEGMPSSDFTTE). A compositionally biased stretch (basic and acidic residues) spans 302–315 (RGKDTAEGTNEDRG).

Belongs to the G-protein coupled receptor 1 family. Interacts with FCN1 (via Fibrinogen C-terminal domain). Expressed at relatively high levels in peripheral blood leukocytes and, to lesser extent, in spleen.

The protein resides in the cell membrane. G protein-coupled receptor that is activated by a major product of dietary fiber digestion, the short chain fatty acids (SCFAs), and that plays a role in the regulation of whole-body energy homeostasis and in intestinal immunity. In omnivorous mammals, the short chain fatty acids acetate, propionate and butyrate are produced primarily by the gut microbiome that metabolizes dietary fibers. SCFAs serve as a source of energy but also act as signaling molecules. That G protein-coupled receptor is probably coupled to the pertussis toxin-sensitive, G(i/o)-alpha family of G proteins but also to the Gq family. Its activation results in the formation of inositol 1,4,5-trisphosphate, the mobilization of intracellular calcium, the phosphorylation of the MAPK3/ERK1 and MAPK1/ERK2 kinases and the inhibition of intracellular cAMP accumulation. May play a role in glucose homeostasis by regulating the secretion of GLP-1, in response to short-chain fatty acids accumulating in the intestine. May also regulate the production of LEP/Leptin, a hormone acting on the central nervous system to inhibit food intake. Finally, may also regulate whole-body energy homeostasis through adipogenesis regulating both differentiation and lipid storage of adipocytes. In parallel to its role in energy homeostasis, may also mediate the activation of the inflammatory and immune responses by SCFA in the intestine, regulating the rapid production of chemokines and cytokines. May also play a role in the resolution of the inflammatory response and control chemotaxis in neutrophils. In addition to SCFAs, may also be activated by the extracellular lectin FCN1 in a process leading to activation of monocytes and inducing the secretion of interleukin-8/IL-8 in response to the presence of microbes. Among SCFAs, the fatty acids containing less than 6 carbons, the most potent activators are probably acetate, propionate and butyrate. Exhibits a SCFA-independent constitutive G protein-coupled receptor activity. In Homo sapiens (Human), this protein is Free fatty acid receptor 2 (FFAR2).